The following is a 341-amino-acid chain: Cell wall mannoprotein PIR1 (341 aa).

The N-terminal stretch at 1–18 (MQYKKSLVASALVATSLA) is a signal peptide. Positions 19-63 (AYAPKDPWSTLTPSATYKGGITDYSSTFGIAVEPIATTASSKAKR) are excised as a propeptide. 8 PIR1/2/3 repeats span residues 64 to 82 (AAAISQIGDGQIQATTKTT), 83 to 101 (AAAVSQIGDGQIQATTKTK), 102 to 125 (AAAVSQIGDGQIQATTKTTSAKTT), 126 to 144 (AAAVSQIGDGQIQATTKTK), 145 to 163 (AAAVSQIGDGQIQATTKTT), 164 to 182 (AAAVSQIGDGQIQATTKTT), 183 to 201 (AAAVSQIGDGQIQATTNTT), and 202 to 220 (VAPVSQITDGQIQATTLTS).

Belongs to the PIR protein family. Post-translationally, covalently linked to beta-1,3-glucan of the inner cell wall layer via an alkali-sensitive ester linkage between the gamma-carboxyl group of glutamic acids, arising from specific glutamines within the PIR1/2/3 repeats, and hydroxyl groups of glucoses of beta-1,3-glucan chains. O-glycosylated. Extensively O-mannosylated.

Its subcellular location is the secreted. It localises to the cell wall. Component of the outer cell wall layer. Required for stability of the cell wall and for optimal growth. Required for resistance against several antifungal and cell wall-perturbing agents and for tolerance to heat shock. The protein is Cell wall mannoprotein PIR1 (PIR1) of Saccharomyces cerevisiae (strain ATCC 204508 / S288c) (Baker's yeast).